A 487-amino-acid chain; its full sequence is Glutamyl-tRNA(Gln) amidotransferase subunit A (487 aa).

Residues Lys-74 and Ser-149 each act as charge relay system in the active site. Catalysis depends on Ser-173, which acts as the Acyl-ester intermediate.

This sequence belongs to the amidase family. GatA subfamily. Heterotrimer of A, B and C subunits.

The catalysed reaction is L-glutamyl-tRNA(Gln) + L-glutamine + ATP + H2O = L-glutaminyl-tRNA(Gln) + L-glutamate + ADP + phosphate + H(+). Functionally, allows the formation of correctly charged Gln-tRNA(Gln) through the transamidation of misacylated Glu-tRNA(Gln) in organisms which lack glutaminyl-tRNA synthetase. The reaction takes place in the presence of glutamine and ATP through an activated gamma-phospho-Glu-tRNA(Gln). The sequence is that of Glutamyl-tRNA(Gln) amidotransferase subunit A from Synechococcus sp. (strain WH7803).